We begin with the raw amino-acid sequence, 197 residues long: Small ribosomal subunit protein uS4c (197 aa).

Residues 82–143 enclose the S4 RNA-binding domain; that stretch reads MRLDNILFRL…KQRSKALIQN (62 aa).

The protein belongs to the universal ribosomal protein uS4 family. In terms of assembly, part of the 30S ribosomal subunit. Contacts protein S5. The interaction surface between S4 and S5 is involved in control of translational fidelity.

The protein localises to the plastid. The protein resides in the chloroplast. Its function is as follows. One of the primary rRNA binding proteins, it binds directly to 16S rRNA where it nucleates assembly of the body of the 30S subunit. In terms of biological role, with S5 and S12 plays an important role in translational accuracy. The polypeptide is Small ribosomal subunit protein uS4c (rps4) (Gladiolus papilio (Goldblotch gladiolus)).